The following is a 665-amino-acid chain: Methionine--tRNA ligase (665 aa).

The 'HIGH' region signature appears at 16-26; the sequence is YYPSGKAHIGH. Positions 311–315 match the 'KMSKS' region motif; the sequence is KMSKS. Lysine 314 is a binding site for ATP. The 102-residue stretch at 564–665 folds into the tRNA-binding domain; it reads DFDKIDLRVA…SALPNGAKVK (102 aa).

The protein belongs to the class-I aminoacyl-tRNA synthetase family. MetG type 2B subfamily. Homodimer.

The protein resides in the cytoplasm. It carries out the reaction tRNA(Met) + L-methionine + ATP = L-methionyl-tRNA(Met) + AMP + diphosphate. Is required not only for elongation of protein synthesis but also for the initiation of all mRNA translation through initiator tRNA(fMet) aminoacylation. This Listeria monocytogenes serotype 4b (strain F2365) protein is Methionine--tRNA ligase.